The primary structure comprises 135 residues: Large ribosomal subunit protein uL16c (135 aa).

A compositionally biased stretch (basic residues) spans 1-17 (MLSPKRTRFRKQHRGRM). The interval 1–21 (MLSPKRTRFRKQHRGRMKGVS) is disordered.

This sequence belongs to the universal ribosomal protein uL16 family. In terms of assembly, part of the 50S ribosomal subunit.

It is found in the plastid. It localises to the chloroplast. The polypeptide is Large ribosomal subunit protein uL16c (Amborella trichopoda).